We begin with the raw amino-acid sequence, 504 residues long: Probable cytochrome P450 513F1 (504 aa).

The helical transmembrane segment at 1-21 threads the bilayer; it reads MILSLLFLFVITLYFLIPSRI. C449 contacts heme.

It belongs to the cytochrome P450 family. The cofactor is heme.

It is found in the membrane. In Dictyostelium discoideum (Social amoeba), this protein is Probable cytochrome P450 513F1 (cyp513F1).